Consider the following 384-residue polypeptide: Lipid-A-disaccharide synthase 1 (384 aa).

This sequence belongs to the LpxB family.

The catalysed reaction is a lipid X + a UDP-2-N,3-O-bis[(3R)-3-hydroxyacyl]-alpha-D-glucosamine = a lipid A disaccharide + UDP + H(+). It participates in bacterial outer membrane biogenesis; LPS lipid A biosynthesis. Functionally, condensation of UDP-2,3-diacylglucosamine and 2,3-diacylglucosamine-1-phosphate to form lipid A disaccharide, a precursor of lipid A, a phosphorylated glycolipid that anchors the lipopolysaccharide to the outer membrane of the cell. The protein is Lipid-A-disaccharide synthase 1 of Legionella pneumophila (strain Lens).